A 331-amino-acid polypeptide reads, in one-letter code: DSC E3 ubiquitin ligase complex subunit D (331 aa).

Residue Asn26 is glycosylated (N-linked (GlcNAc...) asparagine). The next 3 helical transmembrane spans lie at 63-83, 107-127, and 159-179; these read ILIY…ILFA, PFIG…NFFT, and LFLL…LIVE. Positions 188–225 are disordered; sequence STTSTEILRVQDHDSEERGVHRTRPESRSSVVGAELDE. Basic and acidic residues predominate over residues 196–214; the sequence is RVQDHDSEERGVHRTRPES.

In terms of assembly, component of the DSC E3 ubiquitin ligase complex composed of dscA, dscB, dscC and dscD.

It localises to the endoplasmic reticulum membrane. The protein operates within protein modification; protein ubiquitination. Its function is as follows. Component of the DSC E3 ubiquitin ligase complex which is required for the srbA transcriptional activator proteolytic cleavage to release the soluble transcription factor from the membrane in low oxygen or sterol conditions. Required for growth during hypoxia and triazole drug susceptibility, as well as for virulence in a murine model of invasive pulmonary aspergillosis (IPA). The protein is DSC E3 ubiquitin ligase complex subunit D of Aspergillus fumigatus (strain ATCC MYA-4609 / CBS 101355 / FGSC A1100 / Af293) (Neosartorya fumigata).